Consider the following 689-residue polypeptide: Acetyl-coenzyme A synthetase 2-like, mitochondrial (689 aa).

The N-terminal 37 residues, 1–37, are a transit peptide targeting the mitochondrion; it reads MAARTLGRGVGRLLGSLRGLSGQPARPPCGVSAPRRA. Residues 17–46 form a disordered region; the sequence is LRGLSGQPARPPCGVSAPRRAASGPSGSAP. Over residues 32–46 the composition is skewed to low complexity; it reads SAPRRAASGPSGSAP. CoA contacts are provided by residues 224-227 and T341; that span reads RGGR. K396 carries the N6-acetyllysine modification. ATP is bound by residues 417–419, 441–446, D533, and R548; these read GEP and DTWWQT. S556 provides a ligand contact to CoA. Residue R559 participates in ATP binding. K642 carries the N6-acetyllysine modification.

The protein belongs to the ATP-dependent AMP-binding enzyme family. Interacts with SIRT3. In terms of processing, reversibly acetylated on Lys-642. The acetyl-CoA synthase activity is inhibited by acetylation and activated by deacetylation mediated by the deacetylase SIRT3.

The protein localises to the mitochondrion matrix. It catalyses the reaction acetate + ATP + CoA = acetyl-CoA + AMP + diphosphate. The catalysed reaction is propanoate + ATP + CoA = propanoyl-CoA + AMP + diphosphate. Its activity is regulated as follows. Inhibited by acetylation at Lys-642 and activated by deacetylation mediated by the deacetylase SIRT3. In terms of biological role, catalyzes the synthesis of acetyl-CoA from short-chain fatty acids. Acetate is the preferred substrate. Can also utilize propionate with a much lower affinity. Provides acetyl-CoA that is utilized mainly for oxidation under ketogenic conditions. Involved in thermogenesis under ketogenic conditions, using acetate as a vital fuel when carbohydrate availability is insufficient. This is Acetyl-coenzyme A synthetase 2-like, mitochondrial (ACSS1) from Homo sapiens (Human).